The chain runs to 342 residues: tRNA N6-adenosine threonylcarbamoyltransferase (342 aa).

The Fe cation site is built by histidine 114 and histidine 118. Substrate is bound by residues 136–140 (LVSGG), aspartate 169, glycine 182, aspartate 186, and asparagine 275. Aspartate 301 provides a ligand contact to Fe cation.

It belongs to the KAE1 / TsaD family. Fe(2+) is required as a cofactor.

The protein resides in the cytoplasm. The catalysed reaction is L-threonylcarbamoyladenylate + adenosine(37) in tRNA = N(6)-L-threonylcarbamoyladenosine(37) in tRNA + AMP + H(+). In terms of biological role, required for the formation of a threonylcarbamoyl group on adenosine at position 37 (t(6)A37) in tRNAs that read codons beginning with adenine. Is involved in the transfer of the threonylcarbamoyl moiety of threonylcarbamoyl-AMP (TC-AMP) to the N6 group of A37, together with TsaE and TsaB. TsaD likely plays a direct catalytic role in this reaction. This Streptococcus pyogenes serotype M3 (strain ATCC BAA-595 / MGAS315) protein is tRNA N6-adenosine threonylcarbamoyltransferase.